Here is a 239-residue protein sequence, read N- to C-terminus: Ribosomal RNA small subunit methyltransferase G (239 aa).

S-adenosyl-L-methionine contacts are provided by residues glycine 77, phenylalanine 82, 128 to 129 (AE), and arginine 146. Positions 217–239 (RRQTSKKYPRKPGTPNKSPLVES) are disordered.

Belongs to the methyltransferase superfamily. RNA methyltransferase RsmG family.

The protein localises to the cytoplasm. Specifically methylates the N7 position of guanine in position 535 of 16S rRNA. In Staphylococcus epidermidis (strain ATCC 12228 / FDA PCI 1200), this protein is Ribosomal RNA small subunit methyltransferase G.